A 674-amino-acid polypeptide reads, in one-letter code: Amino-acid acetyltransferase, mitochondrial (674 aa).

The transit peptide at 1-50 (MPLVAAMLTRSNGAWKKATSVVQASICRDQQRPNHTTITSVTSVSQRRHF) directs the protein to the mitochondrion. Residues 33 to 45 (PNHTTITSVTSVS) show a composition bias toward polar residues. Residues 33-74 (PNHTTITSVTSVSQRRHFSSAENGAKPSRSHPSAAEAKQKRE) form a disordered region. Positions 497 to 665 (GTPRLKLTDT…YEDVCRGVVP (169 aa)) constitute an N-acetyltransferase domain.

This sequence belongs to the acetyltransferase family.

The protein resides in the mitochondrion. It carries out the reaction L-glutamate + acetyl-CoA = N-acetyl-L-glutamate + CoA + H(+). The protein operates within amino-acid biosynthesis; L-arginine biosynthesis; N(2)-acetyl-L-ornithine from L-glutamate: step 1/4. N-acetylglutamate synthase involved in arginine biosynthesis. The chain is Amino-acid acetyltransferase, mitochondrial (ARG2) from Podospora anserina (strain S / ATCC MYA-4624 / DSM 980 / FGSC 10383) (Pleurage anserina).